A 646-amino-acid polypeptide reads, in one-letter code: Wee1-like protein kinase (646 aa).

The segment at 1 to 181 is disordered; it reads MSFLSRQQPP…GTPPHKTFRK (181 aa). The segment covering 32-43 has biased composition (acidic residues); it reads DCEEEEEEEEEE. S53 carries the phosphoserine; by PLK1 modification. A phosphoserine mark is found at S78 and S85. Low complexity predominate over residues 94–103; it reads LLPGACPGAD. S123 bears the Phosphoserine; by CDK1 mark. A phosphoserine mark is found at S127, S137, S139, S150, and S165. Residues 158–170 show a composition bias toward basic and acidic residues; it reads RAGEGRRSPRPDH. A phosphothreonine mark is found at T187, T190, and T239. Phosphoserine is present on residues S270, S307, and S312. Positions 299-569 constitute a Protein kinase domain; it reads FHELEKIGSG…AMALVKHSVL (271 aa). ATP contacts are provided by residues 305–313 and K328; that span reads IGSGEFGSV. Position 342 (N342) interacts with Mg(2+). D426 acts as the Proton acceptor in catalysis. 3 residues coordinate Mg(2+): N431, D463, and G465. S642 bears the Phosphoserine; by BRSK1 and BRSK2 mark.

This sequence belongs to the protein kinase superfamily. Ser/Thr protein kinase family. WEE1 subfamily. Mg(2+) serves as cofactor. In terms of processing, phosphorylated during M and G1 phases. Also autophosphorylated. Phosphorylation at Ser-642 by BRSK1 and BRSK2 in post-mitotic neurons, leads to down-regulate WEE1 activity in polarized neurons. Phosphorylated at Ser-53 and Ser-123 by PLK1 and CDK1, respectively, generating an signal for degradation that can be recognized by the SCF(BTRC) complex, leading to its ubiquitination and degradation at the onset of G2/M phase. Post-translationally, dephosphorylated at Thr-239 by CTDP1. Dephosphorylated at Ser-53 and Ser-123 by the serine/threonine-protein phosphatase 2A preventing its ubiquitin-mediated degradation. Ubiquitinated and degraded at the onset of G2/M phase.

It is found in the nucleus. It carries out the reaction L-tyrosyl-[protein] + ATP = O-phospho-L-tyrosyl-[protein] + ADP + H(+). Its activity is regulated as follows. Synthesis is increased during S and G2 phases, presumably by an increase in transcription; activity is decreased by phosphorylation during M phase. Protein levels fall in M phase as a result of decreased synthesis combined with degradation. Activity seems to be negatively regulated by phosphorylation upon entry into mitosis, although N-terminal phosphorylation might also regulate the protein stability via protection from proteolysis or might regulate the subcellular location. Functionally, acts as a negative regulator of entry into mitosis (G2 to M transition) by protecting the nucleus from cytoplasmically activated cyclin B1-complexed CDK1 before the onset of mitosis by mediating phosphorylation of CDK1 on 'Tyr-15'. Specifically phosphorylates and inactivates cyclin B1-complexed CDK1 reaching a maximum during G2 phase and a minimum as cells enter M phase. Phosphorylation of cyclin B1-CDK1 occurs exclusively on 'Tyr-15' and phosphorylation of monomeric CDK1 does not occur. Its activity increases during S and G2 phases and decreases at M phase when it is hyperphosphorylated. A correlated decrease in protein level occurs at M/G1 phase, probably due to its degradation. This chain is Wee1-like protein kinase, found in Homo sapiens (Human).